The sequence spans 422 residues: CinA-like protein (422 aa).

Belongs to the CinA family.

This Mycolicibacterium gilvum (strain PYR-GCK) (Mycobacterium gilvum (strain PYR-GCK)) protein is CinA-like protein.